The chain runs to 833 residues: Ventricular zone-expressed PH domain-containing protein 1 (833 aa).

2 interaction with TGFBR1 regions span residues 201 to 319 (AELL…LANM) and 663 to 833 (ESTF…TTYL). The PH domain maps to 716-819 (QPLIEGKLKE…WLQCINVALA (104 aa)).

This sequence belongs to the MELT/VEPH family. In terms of assembly, interacts with TGFBR1. As to expression, specifically expressed in kidney and eye. In the eye, expressed in retinal pigmented epithelium but not in the neural retina.

The protein localises to the cell membrane. Its function is as follows. Interacts with TGF-beta receptor type-1 (TGFBR1) and inhibits dissociation of activated SMAD2 from TGFBR1, impeding its nuclear accumulation and resulting in impaired TGF-beta signaling. May also affect FOXO, Hippo and Wnt signaling. In Mus musculus (Mouse), this protein is Ventricular zone-expressed PH domain-containing protein 1 (Veph1).